Reading from the N-terminus, the 314-residue chain is tRNA dimethylallyltransferase (314 aa).

10-17 (GPTAVGKT) provides a ligand contact to ATP. 12-17 (TAVGKT) contributes to the substrate binding site. The interval 35–38 (DSMQ) is interaction with substrate tRNA.

The protein belongs to the IPP transferase family. As to quaternary structure, monomer. The cofactor is Mg(2+).

It carries out the reaction adenosine(37) in tRNA + dimethylallyl diphosphate = N(6)-dimethylallyladenosine(37) in tRNA + diphosphate. In terms of biological role, catalyzes the transfer of a dimethylallyl group onto the adenine at position 37 in tRNAs that read codons beginning with uridine, leading to the formation of N6-(dimethylallyl)adenosine (i(6)A). The sequence is that of tRNA dimethylallyltransferase from Clostridium novyi (strain NT).